Here is an 878-residue protein sequence, read N- to C-terminus: Alanine--tRNA ligase (878 aa).

4 residues coordinate Zn(2+): His564, His568, Cys665, and His669.

It belongs to the class-II aminoacyl-tRNA synthetase family. Zn(2+) serves as cofactor.

The protein resides in the cytoplasm. The enzyme catalyses tRNA(Ala) + L-alanine + ATP = L-alanyl-tRNA(Ala) + AMP + diphosphate. In terms of biological role, catalyzes the attachment of alanine to tRNA(Ala) in a two-step reaction: alanine is first activated by ATP to form Ala-AMP and then transferred to the acceptor end of tRNA(Ala). Also edits incorrectly charged Ser-tRNA(Ala) and Gly-tRNA(Ala) via its editing domain. In Natranaerobius thermophilus (strain ATCC BAA-1301 / DSM 18059 / JW/NM-WN-LF), this protein is Alanine--tRNA ligase.